The primary structure comprises 146 residues: Snaclec rhodocytin subunit beta (146 aa).

Positions 1–23 are cleaved as a signal peptide; sequence MGRFIFVSFGLLVVFLSLSGTGA. Cystine bridges form between Cys25–Cys36, Cys53–Cys142, and Cys119–Cys134. Residues 32–143 form the C-type lectin domain; that stretch reads YEGHCYKPFN…CSSTCSFVCK (112 aa).

This sequence belongs to the snaclec family. In terms of assembly, dimer (non-covalently linked) of heterodimers of subunits alpha and beta (disulfide-linked). In terms of tissue distribution, expressed by the venom gland.

The protein localises to the secreted. Its function is as follows. Elicits platelet aggregation by the binding to the C-type lectin domain family 1 member B (CLEC1B/CLEC2). Binding leads to tyrosine phosphorylation in the cytoplasmic tail of CLEC1B, which promotes the binding of spleen tyrosine kinase (Syk), subsequent activation of PLCgamma2, and platelet activation and aggregation. Binding to GPIbalpha (GP1BA) and alpha2/beta-1 (ITGA2/ITGB1) may also induce aggregation, but this is controversial. The protein is Snaclec rhodocytin subunit beta of Calloselasma rhodostoma (Malayan pit viper).